The chain runs to 347 residues: MKPPILIIIMSTVILGTMIVMTSSHWMLTWIGFEMNMLAIIPILMKKFNPRAMEASTKYFLTQATASMLLMMGIIINLLHSGQWTVSNNLNPTSSILMTTALAMKLGLAPFHFWVPEVTQGISLSSGMILLTWQKIAPLSVLYQISPTINPNLLLPMAILSVLIGGWGGLNQTQLRKIMAYSSITHMGWMTAILLYNPTMMFLNLIIYITMTLSTFMLFMINSATTTLSLSQTWNKAPLITSLILTLMLSLGGLPPLSGFIPKWMIIQELTKNEMIILPTFLAITALLNLYFYMRLTYTTALTMFPSTNNMKMKWQFENTKKMIFLPPLIITSTMLLPLTPMISILD.

11 helical membrane passes run 3 to 23 (PPILIIIMSTVILGTMIVMTS), 25 to 45 (HWMLTWIGFEMNMLAIIPILM), 59 to 79 (YFLTQATASMLLMMGIIINLL), 96 to 116 (ILMTTALAMKLGLAPFHFWVP), 122 to 142 (ISLSSGMILLTWQKIAPLSVL), 149 to 169 (INPNLLLPMAILSVLIGGWGG), 178 to 198 (IMAYSSITHMGWMTAILLYNP), 201 to 221 (MFLNLIIYITMTLSTFMLFMI), 237 to 257 (APLITSLILTLMLSLGGLPPL), 274 to 294 (EMIILPTFLAITALLNLYFYM), and 323 to 343 (MIFLPPLIITSTMLLPLTPMI).

It belongs to the complex I subunit 2 family. As to quaternary structure, core subunit of respiratory chain NADH dehydrogenase (Complex I) which is composed of 45 different subunits. Interacts with TMEM242.

The protein resides in the mitochondrion inner membrane. It carries out the reaction a ubiquinone + NADH + 5 H(+)(in) = a ubiquinol + NAD(+) + 4 H(+)(out). Core subunit of the mitochondrial membrane respiratory chain NADH dehydrogenase (Complex I) which catalyzes electron transfer from NADH through the respiratory chain, using ubiquinone as an electron acceptor. Essential for the catalytic activity and assembly of complex I. The chain is NADH-ubiquinone oxidoreductase chain 2 from Civettictis civetta (African civet).